A 535-amino-acid chain; its full sequence is E3 ubiquitin-protein ligase rnf168 (535 aa).

The RING-type zinc-finger motif lies at 16–55; that stretch reads CPICQEILLEPVTLPCKHTLCNPCFQMTVEKASLCCPFCR. Positions 112–130 match the LR motif 1 motif; it reads LCKPGEIRQEYEAEVSKIE. The UMI motif signature appears at 145-153; the sequence is EDYIQKLLA. 2 consecutive short sequence motifs (MIU motif) follow at residues 170 to 193 and 406 to 429; these read IEEQ…LSNA and RRKQ…KELK. The segment covering 429 to 443 has biased composition (basic and acidic residues); the sequence is KQVNRGKGSPDEYQL. The segment at 429–535 is disordered; that stretch reads KQVNRGKGSP…LDLFQRSAGK (107 aa). The LR motif 2 motif lies at 433 to 444; sequence RGKGSPDEYQLR. Polar residues-rich tracts occupy residues 462-478 and 492-507; these read NEQT…QSGY and ITSS…TNTE.

Belongs to the RNF168 family. Monomer.

It is found in the nucleus. It carries out the reaction S-ubiquitinyl-[E2 ubiquitin-conjugating enzyme]-L-cysteine + [acceptor protein]-L-lysine = [E2 ubiquitin-conjugating enzyme]-L-cysteine + N(6)-ubiquitinyl-[acceptor protein]-L-lysine.. It participates in protein modification; protein ubiquitination. Its function is as follows. E3 ubiquitin-protein ligase required for accumulation of repair proteins to sites of DNA damage. Acts with ube2n/ubc13 to amplify the rnf8-dependent histone ubiquitination. Recruited to sites of DNA damage at double-strand breaks (DSBs) by binding to ubiquitinated histone H2A and ubiquitinates histone H2A and H2AX, leading to amplify the rnf8-dependent H2A ubiquitination and promoting the formation of 'Lys-63'-linked ubiquitin conjugates. This leads to concentrate ubiquitinated histones H2A and H2AX at DNA lesions to the threshold required for recruitment of tp53bp1 and brca1. Catalyzes monoubiquitination of 'Lys-13' and 'Lys-15' of nucleosomal histone H2A (H2AK13Ub and H2AK15Ub, respectively). This Xenopus tropicalis (Western clawed frog) protein is E3 ubiquitin-protein ligase rnf168.